A 192-amino-acid chain; its full sequence is Imidazoleglycerol-phosphate dehydratase (192 aa).

The protein belongs to the imidazoleglycerol-phosphate dehydratase family.

It is found in the cytoplasm. It carries out the reaction D-erythro-1-(imidazol-4-yl)glycerol 3-phosphate = 3-(imidazol-4-yl)-2-oxopropyl phosphate + H2O. The protein operates within amino-acid biosynthesis; L-histidine biosynthesis; L-histidine from 5-phospho-alpha-D-ribose 1-diphosphate: step 6/9. The protein is Imidazoleglycerol-phosphate dehydratase of Carboxydothermus hydrogenoformans (strain ATCC BAA-161 / DSM 6008 / Z-2901).